Reading from the N-terminus, the 489-residue chain is Cytochrome P450 monooxygenase orf5 (489 aa).

Residues 13 to 35 (FVRLLAFHLIGLFVSITVYRLFF) traverse the membrane as a helical segment. Asn-37, Asn-118, Asn-171, and Asn-345 each carry an N-linked (GlcNAc...) asparagine glycan. Cys-428 provides a ligand contact to heme.

It belongs to the cytochrome P450 family. The cofactor is heme.

It localises to the membrane. The protein operates within mycotoxin biosynthesis. In terms of biological role, cytochrome P450 monooxygenase; part of the gene cluster that mediates the biosynthesis of brefeldin A (BFA), a protein transport inhibitor that shows antiviral, antifungal, and antitumor properties. The proposed biosynthesis of BFA involves formation of an acyclic polyketide chain that is differentially tailored throughout the backbone. The highly reducing polyketide synthase Bref-PKS is proposed to synthesize the precisely reduced octaketide precursor, which could then be directly offloaded by the thiohydrolase enzyme Bref-TH followed by a cytochrome P450 monooxygenase-mediated formation of the cyclopentane ring and macrocyclization to afford 7-deoxy BFA. Alternatively, the first ring annulation can also occur on the ACP-tethered intermediate before the thiohydrolase release and lactonization. The C7-hydroxylation by another cytochrome P450 monooxygenase is believed to be the final step in the process to obtain the final structure of BFA. In addition to the HRPKS Bref-PKS and the thiohydrolase Bref-TH, the brefeldin A biosynthesis cluster contains 4 cytochrome p450 monooxygenases (called orf3 to orf6), as well a the probable cluster-specific transcription regulator orf8. This is Cytochrome P450 monooxygenase orf5 from Eupenicillium brefeldianum (Penicillium brefeldianum).